The sequence spans 251 residues: Protection of telomeres homolog 2 (251 aa).

The tract at residues 221 to 251 (ELDNWPEGPPKTFAEAIARANNSRRPRDPPQ) is disordered.

Belongs to the telombin family.

It localises to the nucleus. It is found in the chromosome. The protein localises to the telomere. Its function is as follows. Telomeric DNA-binding protein, which binds to two or more single-stranded G-rich repeat sequences (G-strand), with high specificity to the 5'-TTAGGC-3' sequence. In addition, repeat sequence binding requires a 3' single-stranded telomeric overhang. Acts redundantly with pot-1 to negatively regulate telomerase-mediated telomere extension. Also regulates telomere length by the telomerase-independent telomere maintenance pathway called ALT (alternative lengthening of telomeres). Does not appear to have a role in anchoring telomeres to the nuclear envelope. This is Protection of telomeres homolog 2 from Caenorhabditis elegans.